The sequence spans 476 residues: ATP synthase subunit beta (476 aa).

161 to 168 (GGAGVGKT) is a binding site for ATP.

This sequence belongs to the ATPase alpha/beta chains family. As to quaternary structure, F-type ATPases have 2 components, CF(1) - the catalytic core - and CF(0) - the membrane proton channel. CF(1) has five subunits: alpha(3), beta(3), gamma(1), delta(1), epsilon(1). CF(0) has three main subunits: a(1), b(2) and c(9-12). The alpha and beta chains form an alternating ring which encloses part of the gamma chain. CF(1) is attached to CF(0) by a central stalk formed by the gamma and epsilon chains, while a peripheral stalk is formed by the delta and b chains.

The protein resides in the cell membrane. It carries out the reaction ATP + H2O + 4 H(+)(in) = ADP + phosphate + 5 H(+)(out). Produces ATP from ADP in the presence of a proton gradient across the membrane. The catalytic sites are hosted primarily by the beta subunits. The polypeptide is ATP synthase subunit beta (Mycolicibacterium gilvum (strain PYR-GCK) (Mycobacterium gilvum (strain PYR-GCK))).